An 876-amino-acid chain; its full sequence is Valine--tRNA ligase (876 aa).

The 'HIGH' region motif lies at 44–54; that stretch reads PNVTGKLHLGH. A 'KMSKS' region motif is present at residues 520–524; sequence KMSKS. Residue lysine 523 coordinates ATP. Positions 806–876 form a coiled coil; sequence EGLIDMDKEI…VKLRINQLKA (71 aa).

Belongs to the class-I aminoacyl-tRNA synthetase family. ValS type 1 subfamily. In terms of assembly, monomer.

The protein localises to the cytoplasm. The catalysed reaction is tRNA(Val) + L-valine + ATP = L-valyl-tRNA(Val) + AMP + diphosphate. Functionally, catalyzes the attachment of valine to tRNA(Val). As ValRS can inadvertently accommodate and process structurally similar amino acids such as threonine, to avoid such errors, it has a 'posttransfer' editing activity that hydrolyzes mischarged Thr-tRNA(Val) in a tRNA-dependent manner. This is Valine--tRNA ligase from Staphylococcus saprophyticus subsp. saprophyticus (strain ATCC 15305 / DSM 20229 / NCIMB 8711 / NCTC 7292 / S-41).